We begin with the raw amino-acid sequence, 472 residues long: MAKTYNAGVKEYRETYWMPEYEPKDSDFLACFKVVPQPGVPREEIAAAVAAESSTGTWTTVWTDLLTDLDYYKGRAYRIEDVPGDDSAFYAFIAYPIDLFEEGSIVSVMTSLVGNVFGFKALRSIRLEDIRFPLAYVMTCGGPPHGIQVERDKMDKYGRPMLGCTIKPKLGLSAKNYGRAVYECLRGGLDFTKDDENVTSQPFMRWRDRFLFCQDAIEKAQDETGERTGHYLNATAGTPEEMYERAEFAKEIGSPIVMHDFLTGGLTANTGLANYCRKNGLLLHIHRAMHGVIDRNPLHGIHFRVLSKVLRLSGGDHLHSGTVVGKLEGDRGSDLGWIDIMRDSFIAEDRSRGIMFDQDFGEMPGVIPVASGGIHVWHMPALVAIFGDDSVLQFGGGTIGHPWGNAVGAAVNLVALEACVQARNEGQEIEKNGKEILTNDGKHSPELKIAMETWKEIKFEFDTVDKLDLSHK.

Substrate contacts are provided by Asn115 and Thr165. The active-site Proton acceptor is Lys167. Lys169 is a binding site for substrate. Residues Lys193, Asp195, and Glu196 each contribute to the Mg(2+) site. At Lys193 the chain carries N6-carboxylysine. The active-site Proton acceptor is the His286. 3 residues coordinate substrate: Arg287, His319, and Ser371.

It belongs to the RuBisCO large chain family. Type I subfamily. As to quaternary structure, heterohexadecamer of 8 large chains and 8 small chains. Mg(2+) is required as a cofactor.

It carries out the reaction 2 (2R)-3-phosphoglycerate + 2 H(+) = D-ribulose 1,5-bisphosphate + CO2 + H2O. The catalysed reaction is D-ribulose 1,5-bisphosphate + O2 = 2-phosphoglycolate + (2R)-3-phosphoglycerate + 2 H(+). RuBisCO catalyzes two reactions: the carboxylation of D-ribulose 1,5-bisphosphate, the primary event in carbon dioxide fixation, as well as the oxidative fragmentation of the pentose substrate. Both reactions occur simultaneously and in competition at the same active site. In Hydrogenovibrio marinus, this protein is Ribulose bisphosphate carboxylase large chain 1.